Consider the following 409-residue polypeptide: Mitochondrial import inner membrane translocase subunit TIM50-B (409 aa).

The transit peptide at 1 to 42 (MSLIAIERVLCGWPKICRKLIVTSRSLTSGLRRALVKQPRKG) directs the protein to the mitochondrion. At 43–127 (GDVGKPGMEL…ELERAFRRMK (85 aa)) the chain is on the mitochondrial matrix side. Residues 93–114 (PQTSEESNDEESRERRKLEEEE) are disordered. The span at 102 to 111 (EESRERRKLE) shows a compositional bias: basic and acidic residues. A helical transmembrane segment spans residues 128 to 148 (LGFGLFGIGSMLFSFWAIYFY). Residues 149–409 (GRPSLDEHGN…KNWTRGFINH (261 aa)) are Mitochondrial intermembrane-facing. In terms of domain architecture, FCP1 homology spans 205–348 (YVQPPYTLVL…FELTSFLSVL (144 aa)).

The protein belongs to the TIM50 family. Component of the TIM23 complex at least composed of Tim23, Tim17 (Tim17a1, Tim17a2 or Tim17b1) and a Tim50. In terms of tissue distribution, exclusively expressed in the testis.

It localises to the mitochondrion inner membrane. In terms of biological role, essential component of the TIM23 complex, a complex that mediates the translocation of transit peptide-containing proteins across the mitochondrial inner membrane. This is Mitochondrial import inner membrane translocase subunit TIM50-B (ttm2) from Drosophila melanogaster (Fruit fly).